Reading from the N-terminus, the 493-residue chain is Malonyl-CoA decarboxylase, mitochondrial (493 aa).

The N-terminal 39 residues, 1–39, are a transit peptide targeting the mitochondrion; sequence MRGFGPGLTARRLLPLRLPPRPPGPRLASGQAAGALERA. Positions 40-190 are alpha-helical domain; that stretch reads MDELLRRAVP…VLKGMLSEWF (151 aa). Lys-59 is subject to N6-acetyllysine. Lys-168 carries the post-translational modification N6-acetyllysine; alternate. Lys-168 carries the post-translational modification N6-succinyllysine; alternate. Residues 191 to 493 are catalytic domain; the sequence is SSGFLNLERV…VAQFQKNSKL (303 aa). Lys-211 is subject to N6-acetyllysine. An N6-succinyllysine modification is found at Lys-222. Malonyl-CoA-binding positions include 299–305 and Ser-329; that span reads QGVELGT. Catalysis depends on Ser-329, which acts as the Proton acceptor. The residue at position 389 (Lys-389) is an N6-acetyllysine. His-423 lines the malonyl-CoA pocket. His-423 (proton donor) is an active-site residue. Lys-472 is modified (N6-acetyllysine). Positions 491–493 match the Microbody targeting signal motif; sequence SKL.

As to quaternary structure, homotetramer. Dimer of dimers. The two subunits within a dimer display conformational differences suggesting that at any given moment, only one of the two subunits is competent for malonyl-CoA binding and catalytic activity. Under oxidizing conditions, can form disulfide-linked homotetramers (in vitro). Associates with the peroxisomal targeting signal receptor PEX5. In terms of processing, acetylation at Lys-472 activates malonyl-CoA decarboxylase activity. Deacetylation at Lys-472 by SIRT4 represses activity, leading to promote lipogenesis. Post-translationally, interchain disulfide bonds may form in peroxisomes (Potential). Interchain disulfide bonds are not expected to form in the reducing environment of the cytoplasm and mitochondria. As to expression, expressed in fibroblasts and hepatoblastoma cells (at protein level). Expressed strongly in heart, liver, skeletal muscle, kidney and pancreas. Expressed in myotubes. Expressed weakly in brain, placenta, spleen, thymus, testis, ovary and small intestine.

The protein localises to the cytoplasm. Its subcellular location is the mitochondrion matrix. The protein resides in the peroxisome. It is found in the peroxisome matrix. The enzyme catalyses malonyl-CoA + H(+) = acetyl-CoA + CO2. Its pathway is metabolic intermediate biosynthesis; acetyl-CoA biosynthesis; acetyl-CoA from malonyl-CoA: step 1/1. With respect to regulation, malonyl-CoA decarboxylase activity does not require any cofactors or divalent metal ions. Formation of interchain disulfide bonds leads to positive cooperativity between active sites and increases the affinity for malonyl-CoA and the catalytic efficiency (in vitro). Its function is as follows. Catalyzes the conversion of malonyl-CoA to acetyl-CoA. In the fatty acid biosynthesis MCD selectively removes malonyl-CoA and thus assures that methyl-malonyl-CoA is the only chain elongating substrate for fatty acid synthase and that fatty acids with multiple methyl side chains are produced. In peroxisomes it may be involved in degrading intraperoxisomal malonyl-CoA, which is generated by the peroxisomal beta-oxidation of odd chain-length dicarboxylic fatty acids. Plays a role in the metabolic balance between glucose and lipid oxidation in muscle independent of alterations in insulin signaling. May play a role in controlling the extent of ischemic injury by promoting glucose oxidation. This Homo sapiens (Human) protein is Malonyl-CoA decarboxylase, mitochondrial.